Consider the following 1404-residue polypeptide: Proteoglycan 4 (1404 aa).

An N-terminal signal peptide occupies residues 1-24; sequence MAWKTLPIYLLLLLSVFVIQQVSS. SMB domains lie at 26–69 and 66–108; these read DLSS…AELS and AELS…AEVH. Intrachain disulfides connect cysteine 30–cysteine 34, cysteine 30–cysteine 46, cysteine 34–cysteine 64, cysteine 44–cysteine 46, cysteine 44–cysteine 57, cysteine 50–cysteine 56, cysteine 57–cysteine 64, cysteine 70–cysteine 74, cysteine 70–cysteine 86, cysteine 74–cysteine 104, cysteine 84–cysteine 86, cysteine 84–cysteine 97, cysteine 90–cysteine 96, and cysteine 97–cysteine 104. The tract at residues 111–966 is disordered; the sequence is TSPPSSKKAP…TTQVTSTTTQ (856 aa). O-linked (GalNAc...) serine glycosylation is found at serine 123 and serine 136. Positions 132-146 are enriched in basic residues; it reads TTKRSPKPPNKKKTK. The segment covering 166–177 has biased composition (low complexity); sequence SSSSSSSSSSSS. Basic and acidic residues predominate over residues 193-205; it reads ELQKKLKVKDNKK. N-linked (GlcNAc...) asparagine glycosylation is present at asparagine 206. A compositionally biased stretch (polar residues) spans 235–252; the sequence is TPDTSTTQHNKVSTSPKI. Residues threonine 240 and threonine 253 are each glycosylated (O-linked (GalNAc...) threonine). The span at 266-276 shows a compositional bias: polar residues; it reads PNSDTSKETSL. 3 O-linked (GalNAc...) threonine glycosylation sites follow: threonine 277, threonine 291, and threonine 305. Residue serine 306 is glycosylated (O-linked (GalNAc...) serine). The O-linked (GalNAc...) threonine glycan is linked to threonine 310. A glycan (O-linked (GalNAc...) serine) is linked at serine 317. 3 O-linked (GalNAc...) threonine glycosylation sites follow: threonine 324, threonine 332, and threonine 338. Low complexity-rich tracts occupy residues 329–348 and 356–405; these read AKPT…TTPK and KEPA…KEPA. Repeat 1 spans residues 348 to 355; sequence KEPTPTTP. The segment at 348–855 is 59 X 8 AA repeats of K-X-P-X-P-T-T-X; that stretch reads KEPTPTTPKE…TPETPPPTTS (508 aa). The 2; approximate repeat unit spans residues 356–363; it reads KEPASTTP. Repeat 3 spans residues 364–371; that stretch reads KEPTPTTI. An O-linked (GalNAc...) threonine glycan is attached at threonine 367. The stretch at 372 to 378 is one 4; approximate repeat; it reads KSAPTTP. An O-linked (GalNAc...) serine glycan is attached at serine 373. O-linked (GalNAc...) threonine glycans are attached at residues threonine 376, threonine 384, and threonine 385. Repeat unit 5 spans residues 379–386; the sequence is KEPAPTTT. A 6; approximate repeat occupies 387-393; that stretch reads KSAPTTP. Residue serine 388 is glycosylated (O-linked (GalNAc...) serine). 7 O-linked (GalNAc...) threonine glycosylation sites follow: threonine 391, threonine 399, threonine 400, threonine 407, threonine 408, threonine 415, and threonine 423. Tandem repeats lie at residues 394–401, 402–409, 410–417, and 418–425. The segment covering 413–431 has biased composition (low complexity); sequence APTTTKEPAPTTTKSAPTT. The stretch at 426 to 432 is one 11; approximate repeat; that stretch reads KSAPTTP. The O-linked (GalNAc...) serine glycan is linked to serine 427. O-linked (GalNAc...) threonine glycans are attached at residues threonine 430, threonine 438, threonine 439, threonine 446, threonine 447, threonine 454, and threonine 455. 2 stretches are compositionally biased toward pro residues: residues 432–467 and 476–506; these read PKEP…PKEP and PTTP…PKEP. Tandem repeats lie at residues 433–440, 441–448, 449–456, and 457–464. The stretch at 465 to 471 is one 16; approximate repeat; that stretch reads KEPAPTT. Copy 17 of the repeat occupies 472-479; it reads KEPAPTTP. Threonine 477, threonine 478, threonine 485, threonine 493, threonine 494, threonine 501, threonine 502, and threonine 509 each carry an O-linked (GalNAc...) threonine glycan. An 18; approximate repeat occupies 480–487; it reads KEPAPTAP. The stretch at 488 to 495 is one 19; approximate repeat; it reads KKPAPTTP. 4 consecutive repeat copies span residues 496–503, 504–511, 512–519, and 520–527. Over residues 523-561 the composition is skewed to low complexity; it reads APTTTKSAPTTTKEPAPTTTKSAPTTPKEPSPTTTKEPA. O-linked (GalNAc...) threonine glycosylation occurs at threonine 525. A 24; approximate repeat occupies 528–534; the sequence is KSAPTTT. O-linked (GalNAc...) serine glycosylation occurs at serine 529. Threonine 532, threonine 540, and threonine 541 each carry an O-linked (GalNAc...) threonine glycan. Repeat 25 spans residues 535 to 542; sequence KEPAPTTT. A 26; approximate repeat occupies 543-549; that stretch reads KSAPTTP. 6 consecutive repeat copies span residues 550-557, 558-565, 566-573, 574-581, 582-589, and 590-597. Serine 553 carries an O-linked (GalNAc...) serine glycan. O-linked (GalNAc...) threonine glycosylation is found at threonine 555, threonine 563, threonine 564, threonine 571, threonine 572, threonine 579, threonine 580, threonine 587, threonine 588, threonine 595, threonine 603, threonine 604, threonine 611, threonine 612, threonine 616, threonine 619, and threonine 627. Residues 562–592 are compositionally biased toward pro residues; that stretch reads PTTPKEPAPTTPKKPAPTTPKEPAPTTPKEP. Residues 598–605 form a 33; approximate repeat; the sequence is KKPAPTTP. Pro residues predominate over residues 602–611; sequence PTTPKEPAPT. The stretch at 606–613 is repeat 34; it reads KEPAPTTP. The segment covering 612 to 636 has biased composition (low complexity); sequence TPKETAPTTPKKLTPTTPEKLAPTT. One copy of the 35; approximate repeat lies at 614–621; that stretch reads KETAPTTP. One copy of the 36; approximate repeat lies at 622–629; it reads KKLTPTTP. A 37; approximate repeat occupies 638 to 645; that stretch reads EKPAPTTP. Residues 653–667 are compositionally biased toward pro residues; the sequence is PEEPTPTTPEEPAPT. A 38; approximate repeat occupies 662-669; that stretch reads EEPAPTTP. Residues threonine 676, threonine 683, threonine 684, threonine 691, threonine 692, threonine 699, threonine 700, threonine 704, and threonine 707 are each glycosylated (O-linked (GalNAc...) threonine). A compositionally biased stretch (pro residues) spans 677–699; that stretch reads PKEPAPTTPKEPAPTTPKEPAPT. 3 consecutive repeat copies span residues 678-685, 686-693, and 694-701. The span at 700–721 shows a compositional bias: low complexity; it reads TPKETAPTTPKGTAPTTLKEPA. One copy of the 42; approximate repeat lies at 702–709; the sequence is KETAPTTP. Residues 710–717 form a 43; approximate repeat; sequence KGTAPTTL. Copy 44 of the repeat occupies 718 to 725; sequence KEPAPTTP. O-linked (GalNAc...) threonine glycans are attached at residues threonine 723, threonine 724, and threonine 736. Positions 728-761 are enriched in low complexity; the sequence is PAPKELAPTTTKEPTSTTSDKPAPTTPKGTAPTT. The stretch at 731–738 is one 45; approximate repeat; the sequence is KELAPTTT. Residues 739–746 form a 46; approximate repeat; that stretch reads KEPTSTTS. One copy of the 47; approximate repeat lies at 747-754; it reads DKPAPTTP. The 48; approximate repeat unit spans residues 755-762; it reads KGTAPTTP. Residues 762-776 show a composition bias toward pro residues; it reads PKEPAPTTPKEPAPT. 2 consecutive repeat copies span residues 763–770 and 771–778. O-linked (GalNAc...) threonine glycosylation is found at threonine 768, threonine 769, threonine 776, and threonine 777. Residues 777 to 790 are compositionally biased toward low complexity; sequence TPKGTAPTTLKEPA. Residues 779 to 786 form a 51; approximate repeat; it reads KGTAPTTL. Residues 787-794 form repeat 52; sequence KEPAPTTP. 3 O-linked (GalNAc...) threonine glycosylation sites follow: threonine 792, threonine 793, and threonine 805. Positions 797–830 are enriched in low complexity; that stretch reads PAPKELAPTTTKGPTSTTSDKPAPTTPKETAPTT. The stretch at 800–807 is one 53; approximate repeat; it reads KELAPTTT. The 54; approximate repeat unit spans residues 808–815; the sequence is KGPTSTTS. An O-linked (GalNAc...) serine glycan is attached at serine 812. The stretch at 816–823 is one 55; approximate repeat; the sequence is DKPAPTTP. The stretch at 824-831 is one 56; approximate repeat; sequence KETAPTTP. Residues threonine 829, threonine 837, and threonine 838 are each glycosylated (O-linked (GalNAc...) threonine). The span at 831-853 shows a compositional bias: pro residues; sequence PKEPAPTTPKKPAPTTPETPPPT. Repeat copies occupy residues 832–839 and 840–847. The stretch at 848–855 is one 59; approximate repeat; sequence ETPPPTTS. Positions 854–866 are enriched in low complexity; that stretch reads TSEVSTPTTTKEP. Serine 892 carries O-linked (GalNAc...) serine glycosylation. Positions 899–914 are enriched in low complexity; the sequence is PTTKTPAATKPEMTTT. Residue threonine 900 is glycosylated (O-linked (GalNAc...) threonine). The segment covering 915-926 has biased composition (basic and acidic residues); the sequence is AKDKTTERDLRT. A compositionally biased stretch (low complexity) spans 927-966; sequence TPETTTAAPKMTKETATTTEKTTESKITATTTQVTSTTTQ. Residues threonine 930 and threonine 931 are each glycosylated (O-linked (GalNAc...) threonine). Serine 962 carries O-linked (GalNAc...) serine glycosylation. Threonine 963, threonine 968, threonine 975, threonine 978, threonine 979, and threonine 980 each carry an O-linked (GalNAc...) threonine glycan. A disordered region spans residues 992–1104; sequence ITTTEIMNKP…EDAGGAEGET (113 aa). The span at 999–1012 shows a compositional bias: basic and acidic residues; that stretch reads NKPEETAKPKDRAT. Over residues 1026 to 1047 the composition is skewed to basic residues; sequence KAPKKPTSTKKPKTMPRVRKPK. O-linked (GalNAc...) threonine glycosylation is present at threonine 1039. The span at 1048–1060 shows a compositional bias: low complexity; the sequence is TTPTPRKMTSTMP. The segment covering 1073–1085 has biased composition (polar residues); sequence LQTTTRPNQTPNS. Cysteine 1146 and cysteine 1403 are oxidised to a cystine. 2 Hemopexin repeats span residues 1148-1191 and 1192-1239; these read GKPV…VWGI and PSPI…FGGL. Asparagine 1159 is a glycosylation site (N-linked (GlcNAc...) asparagine). A glycan (O-linked (GalNAc...) threonine) is linked at threonine 1161.

In terms of assembly, homodimer; disulfide-linked. Post-translationally, N-glycosylated. O-glycosylated; contains glycosaminoglycan chondroitin sulfate and keratan sulfate. O-glycosylated with sialylated oligosaccharides which are predominantly represented by the monosialylated core type I structure, NeuNAcalpha2-3Galbeta1-3GalNAc, with smaller amounts of disialylated O-glycans. In terms of processing, the disulfide bond between Cys-1146 and Cys-1403 is essential for protein cleavage. Post-translationally, proteolytically cleaved by cathepsin CTSG. As to expression, highly expressed in synovial tissue, cartilage and liver and weakly in heart and lung. Isoform B is expressed in kidney, lung, liver, heart and brain. Isoform C and isoform D are widely expressed.

It is found in the secreted. In terms of biological role, plays a role in boundary lubrication within articulating joints. Prevents protein deposition onto cartilage from synovial fluid by controlling adhesion-dependent synovial growth and inhibiting the adhesion of synovial cells to the cartilage surface. Isoform F plays a role as a growth factor acting on the primitive cells of both hematopoietic and endothelial cell lineages. This Homo sapiens (Human) protein is Proteoglycan 4 (PRG4).